The chain runs to 48 residues: DNA-directed RNA polymerase subunit Rpo12 (48 aa).

3 residues coordinate Zn(2+): cysteine 9, cysteine 26, and cysteine 29.

The protein belongs to the archaeal Rpo12/eukaryotic RPC10 RNA polymerase subunit family. Part of the RNA polymerase complex. Zn(2+) serves as cofactor.

Its subcellular location is the cytoplasm. The catalysed reaction is RNA(n) + a ribonucleoside 5'-triphosphate = RNA(n+1) + diphosphate. Functionally, DNA-dependent RNA polymerase (RNAP) catalyzes the transcription of DNA into RNA using the four ribonucleoside triphosphates as substrates. This chain is DNA-directed RNA polymerase subunit Rpo12, found in Sulfurisphaera tokodaii (strain DSM 16993 / JCM 10545 / NBRC 100140 / 7) (Sulfolobus tokodaii).